A 444-amino-acid chain; its full sequence is Phosphoglucosamine mutase (444 aa).

Residue Ser102 is the Phosphoserine intermediate of the active site. 4 residues coordinate Mg(2+): Ser102, Asp241, Asp243, and Asp245. Ser102 is modified (phosphoserine).

The protein belongs to the phosphohexose mutase family. Requires Mg(2+) as cofactor. Activated by phosphorylation.

It catalyses the reaction alpha-D-glucosamine 1-phosphate = D-glucosamine 6-phosphate. Catalyzes the conversion of glucosamine-6-phosphate to glucosamine-1-phosphate. This chain is Phosphoglucosamine mutase, found in Glaesserella parasuis serovar 5 (strain SH0165) (Haemophilus parasuis).